Reading from the N-terminus, the 200-residue chain is Holliday junction branch migration complex subunit RuvA (200 aa).

Residues 1–64 (MYAYFRGRVV…EDALQLYGFS (64 aa)) form a domain I region. Residues 65–143 (SEEEKQLFRL…KLSPPGAAAT (79 aa)) are domain II. The interval 144–154 (PAGAVQCGIRE) is flexible linker. Residues 154–200 (EDATNALLTLGFSRTAAQQAVAGVLEANPGGSVEDVVKSALLAMHNR) form a domain III region.

This sequence belongs to the RuvA family. Homotetramer. Forms an RuvA(8)-RuvB(12)-Holliday junction (HJ) complex. HJ DNA is sandwiched between 2 RuvA tetramers; dsDNA enters through RuvA and exits via RuvB. An RuvB hexamer assembles on each DNA strand where it exits the tetramer. Each RuvB hexamer is contacted by two RuvA subunits (via domain III) on 2 adjacent RuvB subunits; this complex drives branch migration. In the full resolvosome a probable DNA-RuvA(4)-RuvB(12)-RuvC(2) complex forms which resolves the HJ.

The protein localises to the cytoplasm. Its function is as follows. The RuvA-RuvB-RuvC complex processes Holliday junction (HJ) DNA during genetic recombination and DNA repair, while the RuvA-RuvB complex plays an important role in the rescue of blocked DNA replication forks via replication fork reversal (RFR). RuvA specifically binds to HJ cruciform DNA, conferring on it an open structure. The RuvB hexamer acts as an ATP-dependent pump, pulling dsDNA into and through the RuvAB complex. HJ branch migration allows RuvC to scan DNA until it finds its consensus sequence, where it cleaves and resolves the cruciform DNA. The sequence is that of Holliday junction branch migration complex subunit RuvA from Chlorobium luteolum (strain DSM 273 / BCRC 81028 / 2530) (Pelodictyon luteolum).